The primary structure comprises 452 residues: Pup--protein ligase (452 aa).

A Mg(2+)-binding site is contributed by Glu-9. Arg-53 serves as a coordination point for ATP. Mg(2+) is bound at residue Tyr-55. Asp-57 functions as the Proton acceptor in the catalytic mechanism. Glu-63 is a binding site for Mg(2+). ATP is bound by residues Thr-66 and Trp-419.

It belongs to the Pup ligase/Pup deamidase family. Pup-conjugating enzyme subfamily.

The catalysed reaction is ATP + [prokaryotic ubiquitin-like protein]-L-glutamate + [protein]-L-lysine = ADP + phosphate + N(6)-([prokaryotic ubiquitin-like protein]-gamma-L-glutamyl)-[protein]-L-lysine.. Its pathway is protein degradation; proteasomal Pup-dependent pathway. It functions in the pathway protein modification; protein pupylation. Its function is as follows. Catalyzes the covalent attachment of the prokaryotic ubiquitin-like protein modifier Pup to the proteasomal substrate proteins, thereby targeting them for proteasomal degradation. This tagging system is termed pupylation. The ligation reaction involves the side-chain carboxylate of the C-terminal glutamate of Pup and the side-chain amino group of a substrate lysine. This is Pup--protein ligase from Mycobacteroides abscessus (strain ATCC 19977 / DSM 44196 / CCUG 20993 / CIP 104536 / JCM 13569 / NCTC 13031 / TMC 1543 / L948) (Mycobacterium abscessus).